Reading from the N-terminus, the 185-residue chain is Lipid A acyltransferase PagP (185 aa).

An N-terminal signal peptide occupies residues 1-14 (MKLKPVLYLLMLLG). Cys-15 is lipidated: N-palmitoyl cysteine. A lipid anchor (S-diacylglycerol cysteine) is attached at Cys-15. Catalysis depends on residues His-57, Asp-100, and Ser-101.

This sequence belongs to the lipid A palmitoyltransferase family. Homodimer.

It is found in the cell outer membrane. It catalyses the reaction a lipid A + a 1,2-diacyl-sn-glycero-3-phosphocholine = a hepta-acyl lipid A + a 2-acyl-sn-glycero-3-phosphocholine. The enzyme catalyses a lipid IVA + a 1,2-diacyl-sn-glycero-3-phosphocholine = a lipid IVB + a 2-acyl-sn-glycero-3-phosphocholine. The catalysed reaction is a lipid IIA + a 1,2-diacyl-sn-glycero-3-phosphocholine = a lipid IIB + a 2-acyl-sn-glycero-3-phosphocholine. Functionally, transfers a fatty acid residue from the sn-1 position of a phospholipid to the N-linked hydroxyfatty acid chain on the proximal unit of lipid A or its precursors. In Erwinia pyrifoliae (strain DSM 12163 / CIP 106111 / Ep16/96), this protein is Lipid A acyltransferase PagP.